A 309-amino-acid chain; its full sequence is MSAAVAAPARTRLTHLQRLEAESIHIFREAVAEAENPVMLYSIGKDSSVLLHLALKAFAPGRLPFPLLHIDTTWKFREMIAFRDRRAKELGLELIVHTNQDGLAKGIGPVSHGSEVHTDVMKTQALRQALDTYKYDVAFGGARRDEEASRAKERIVSLRNAQHRWDPKRQRAEPWHLYNFKKRRGESFRVFPLSNWTELDIWLYIEQENIPIVPLYFAAERPVVERDGQLIMVDDDRFPLEPGETPQQRQVRFRTLGCYPLTGAVESPAATLPEIIGETLAARTSERQGRVIDKDGAGAMERKKQEGYF.

The protein belongs to the PAPS reductase family. CysD subfamily. In terms of assembly, heterodimer composed of CysD, the smaller subunit, and CysN.

The catalysed reaction is sulfate + ATP + H(+) = adenosine 5'-phosphosulfate + diphosphate. It functions in the pathway sulfur metabolism; hydrogen sulfide biosynthesis; sulfite from sulfate: step 1/3. Functionally, with CysN forms the ATP sulfurylase (ATPS) that catalyzes the adenylation of sulfate producing adenosine 5'-phosphosulfate (APS) and diphosphate, the first enzymatic step in sulfur assimilation pathway. APS synthesis involves the formation of a high-energy phosphoric-sulfuric acid anhydride bond driven by GTP hydrolysis by CysN coupled to ATP hydrolysis by CysD. The polypeptide is Sulfate adenylyltransferase subunit 2 (Methylorubrum populi (strain ATCC BAA-705 / NCIMB 13946 / BJ001) (Methylobacterium populi)).